Consider the following 160-residue polypeptide: 2-C-methyl-D-erythritol 2,4-cyclodiphosphate synthase (160 aa).

Positions 11 and 13 each coordinate a divalent metal cation. 4-CDP-2-C-methyl-D-erythritol 2-phosphate contacts are provided by residues 11-13 and 37-38; these read DVH and HS. H45 is a binding site for a divalent metal cation. Residues 59 to 61 and R145 contribute to the 4-CDP-2-C-methyl-D-erythritol 2-phosphate site; that span reads DIG.

This sequence belongs to the IspF family. In terms of assembly, homotrimer. Requires a divalent metal cation as cofactor.

The enzyme catalyses 4-CDP-2-C-methyl-D-erythritol 2-phosphate = 2-C-methyl-D-erythritol 2,4-cyclic diphosphate + CMP. The protein operates within isoprenoid biosynthesis; isopentenyl diphosphate biosynthesis via DXP pathway; isopentenyl diphosphate from 1-deoxy-D-xylulose 5-phosphate: step 4/6. Its function is as follows. Involved in the biosynthesis of isopentenyl diphosphate (IPP) and dimethylallyl diphosphate (DMAPP), two major building blocks of isoprenoid compounds. Catalyzes the conversion of 4-diphosphocytidyl-2-C-methyl-D-erythritol 2-phosphate (CDP-ME2P) to 2-C-methyl-D-erythritol 2,4-cyclodiphosphate (ME-CPP) with a corresponding release of cytidine 5-monophosphate (CMP). The sequence is that of 2-C-methyl-D-erythritol 2,4-cyclodiphosphate synthase from Neisseria gonorrhoeae (strain ATCC 700825 / FA 1090).